We begin with the raw amino-acid sequence, 453 residues long: Tubulin alpha-1 chain (453 aa).

Positions 11, 71, 144, 145, 179, 206, and 228 each coordinate GTP. Residue Glu-71 coordinates Mg(2+). Glu-254 is a catalytic residue. Positions 433 to 453 (EEVGAETADGDGEEEEFGEEY) are disordered.

It belongs to the tubulin family. As to quaternary structure, dimer of alpha and beta chains. A typical microtubule is a hollow water-filled tube with an outer diameter of 25 nm and an inner diameter of 15 nM. Alpha-beta heterodimers associate head-to-tail to form protofilaments running lengthwise along the microtubule wall with the beta-tubulin subunit facing the microtubule plus end conferring a structural polarity. Microtubules usually have 13 protofilaments but different protofilament numbers can be found in some organisms and specialized cells. The cofactor is Mg(2+). Undergoes a tyrosination/detyrosination cycle, the cyclic removal and re-addition of a C-terminal tyrosine residue by the enzymes tubulin tyrosine carboxypeptidase (TTCP) and tubulin tyrosine ligase (TTL), respectively.

It localises to the cytoplasm. It is found in the cytoskeleton. It carries out the reaction GTP + H2O = GDP + phosphate + H(+). Functionally, tubulin is the major constituent of microtubules, a cylinder consisting of laterally associated linear protofilaments composed of alpha- and beta-tubulin heterodimers. Microtubules grow by the addition of GTP-tubulin dimers to the microtubule end, where a stabilizing cap forms. Below the cap, tubulin dimers are in GDP-bound state, owing to GTPase activity of alpha-tubulin. The polypeptide is Tubulin alpha-1 chain (TUBA1) (Pelvetia fastigiata (Brown alga)).